Here is a 111-residue protein sequence, read N- to C-terminus: Mitochondrial import inner membrane translocase subunit Tim10B (111 aa).

The Twin CX3C motif motif lies at 24–48 (CFNACARDYTTSTLTKDEGSCVSQC). Disulfide bonds link Cys-24-Cys-48 and Cys-28-Cys-44. A disordered region spans residues 73-111 (KQGEQSPTEAIKSAKPEPAVPAPEATPVETTPVIEENKQ). The segment covering 94-105 (APEATPVETTPV) has biased composition (low complexity).

It belongs to the small Tim family. As to quaternary structure, component of the TIM22 complex, whose core is composed of tim-22, associated with peripheral protein tin-9.2/tim-10b and the 70 kDa heterohexamer. In most cases, the 70 kDa complex is composed of TIMM9 and TIMM10.

The protein resides in the mitochondrion inner membrane. Component of the TIM22 complex, a complex that mediates the import and insertion of multi-pass transmembrane proteins into the mitochondrial inner membrane. The TIM22 complex forms a twin-pore translocase that uses the membrane potential as the external driving force. In the TIM22 complex, it may act as a docking point for the soluble 70 kDa complex that guides the target proteins in transit through the aqueous mitochondrial intermembrane space. This is Mitochondrial import inner membrane translocase subunit Tim10B (tin-9.2) from Caenorhabditis elegans.